A 287-amino-acid chain; its full sequence is ATP synthase gamma chain (287 aa).

This sequence belongs to the ATPase gamma chain family. In terms of assembly, F-type ATPases have 2 components, CF(1) - the catalytic core - and CF(0) - the membrane proton channel. CF(1) has five subunits: alpha(3), beta(3), gamma(1), delta(1), epsilon(1). CF(0) has three main subunits: a, b and c.

It is found in the cell inner membrane. Produces ATP from ADP in the presence of a proton gradient across the membrane. The gamma chain is believed to be important in regulating ATPase activity and the flow of protons through the CF(0) complex. The chain is ATP synthase gamma chain from Shigella boydii serotype 4 (strain Sb227).